A 480-amino-acid chain; its full sequence is Protein U54 (480 aa).

The sequence is that of Protein U54 from Elephas maximus (Indian elephant).